The following is a 1306-amino-acid chain: Putative late blight resistance protein homolog R1A-10 (1306 aa).

Coiled-coil stretches lie at residues 407-428 and 520-542; these read SDSLAFLKNQLQVIQTEFESLQ and PRMKEEIVGFEDVIENLRKKLLS. The region spanning 521–808 is the NB-ARC domain; sequence RMKEEIVGFE…SEAFIKSSEG (288 aa). ATP is bound at residue 554–561; it reads GMPGLGKT. LRR repeat units lie at residues 858-881, 921-935, 936-961, 979-1007, 1010-1035, 1057-1081, 1082-1106, 1110-1129, 1130-1153, 1156-1181, and 1216-1240; these read AEENFLLWINRDQITKPSSCVYSH, LSSLHDFSISRILPN, FKFLKVLDLEHRVFIDFIPTELPYLR, LWNLETLILNRRSADSHNRVLLPSTVWDM, LRHLHIPNFSPENKKALLKNSPNLDD, TPNLRKLTCKVKCLEYLHQYHALNF, PIRLEILKLYRSNAFKAIPFCISAP, YLKLSGFYLDSQYLSKTADH, LKNLEVLKLYYVEFGDHREWKVSN, FPQLKILKLEDVSLMKWIVADDAFPN, and ESVVKSAMNIQETQVEDYQNTNFKL. Positions 1240-1306 constitute an HMA domain; the sequence is LVLIEKWPKF…KLRKCGMPGL (67 aa).

Belongs to the disease resistance NB-LRR family.

It is found in the cytoplasm. The protein localises to the membrane. In terms of biological role, confers resistance to late blight (Phytophthora infestans) races carrying the avirulence gene Avr1. Resistance proteins guard the plant against pathogens that contain an appropriate avirulence protein via an indirect interaction with this avirulence protein. That triggers a defense system including the hypersensitive response, which restricts the pathogen growth. The protein is Putative late blight resistance protein homolog R1A-10 (R1A-10) of Solanum demissum (Wild potato).